Consider the following 190-residue polypeptide: Ribosome maturation factor RimP (190 aa).

The interval 159-190 (ELELAGGIPEGRVAPADADASEDEEVVEGLDK) is disordered. The segment covering 177–190 (DASEDEEVVEGLDK) has biased composition (acidic residues).

It belongs to the RimP family.

It is found in the cytoplasm. Required for maturation of 30S ribosomal subunits. The chain is Ribosome maturation factor RimP from Rhodococcus opacus (strain B4).